Reading from the N-terminus, the 195-residue chain is Putative manganese efflux pump MntP (195 aa).

A run of 6 helical transmembrane segments spans residues 3–23 (LSAT…ASVG), 40–60 (GLIF…LGLL), 68–88 (WDHW…VLAG), 106–126 (VLIA…VGLA), 132–152 (ILHA…IGML), and 165–185 (AEII…YSHI).

This sequence belongs to the MntP (TC 9.B.29) family.

The protein resides in the cell inner membrane. Functionally, probably functions as a manganese efflux pump. The polypeptide is Putative manganese efflux pump MntP (Sodalis glossinidius (strain morsitans)).